Reading from the N-terminus, the 429-residue chain is Phosphoribosylamine--glycine ligase (429 aa).

The region spanning Lys-109–Asp-316 is the ATP-grasp domain. Residue Leu-135–Ser-196 participates in ATP binding. Mg(2+) contacts are provided by Glu-286 and Asn-288.

Belongs to the GARS family. Requires Mg(2+) as cofactor. Mn(2+) serves as cofactor.

The enzyme catalyses 5-phospho-beta-D-ribosylamine + glycine + ATP = N(1)-(5-phospho-beta-D-ribosyl)glycinamide + ADP + phosphate + H(+). It participates in purine metabolism; IMP biosynthesis via de novo pathway; N(1)-(5-phospho-D-ribosyl)glycinamide from 5-phospho-alpha-D-ribose 1-diphosphate: step 2/2. This is Phosphoribosylamine--glycine ligase from Haemophilus influenzae (strain ATCC 51907 / DSM 11121 / KW20 / Rd).